A 1665-amino-acid chain; its full sequence is MATDGASCEPDFSRSPEDAAGATAEAAKKEFDVDTLSKSELLMLLSVMEGELEARDLVIEALRARRKEVFIQERYGRFNLNDPFLALQRDYEAGAGDKEKKPVCTNPLSILEAVMAHCRKMQERMSTQLAAAESRQKKLEMEKLQLQALEQEHKKLASRLEEERGKNKHVVLMLVKECKQLSSKVIEEAQKLEEVMAKLEEEKKKTSALEEELSAEKRRSTEMEAQMEKQLSEFDTEREQLRAKLHREEAHTTDLKEEIDKMKKMIEQLKRGNDNKPSLSLPRKTKDRRLVSISVGTEGPMTRSVACQTDPVIESSDHVKKLPLTMPVKPSTGSPLVSANAKGNVCTNAALVRPGIDRQASHGDLIGSSLPTVPPPSANRIEENGPSTGSTADLTSSTPPLPNNAAPPTVQTPGVAPQSYSQASPMHSLHSPCANASLHPGLNPRIQAARFRFQGNANDPDQNGNTTQSPPSRDVSPTSRENLVAKQLARNTVTQALSRFTSPQAGAPPRPGVSPTGDVGTYPPVGRTSLKTPGVARVDRGNPPPIPPKKPGLSQTPSPPHPQLKVIMDSSRASNAGAKVDNKTVASPPSSLPQGNRVINEENLPKSSSPQLPPKPSIDLTVAPAGCAVSALATSQVGAWPAETPGLNQPACSESSLVIPTTIAFSSSINPVSASSCRAGASDSLLVTASGWSPSLTPLLMSGGPAPLAGRPTLLQQAAAQGNVTLLSMLLNEEGLDINYSCEDGHSALYSAAKNGHTDCVRLLLNAEAQVDAADKNGFTPLCAAAAQGHFKCVQLLIAYDANINHAADGGQTPLYLACKNGNKECIKLLLEAGSDRSIKTRDGWTPVHAAVDTGNVDSLKLLMYHRAPAHGSSLHKEEPESSIFDLDRQGEESPEGTFKPVVPADLINQADREGWTAAHIAASKGFKNCLEILCRHGGLEPERRDKCSRTAHDVATDDCKHLLENLNALKIPLRISVGEIQPGNYGSDDFECENTICALNIRKQTSWDDFSKAVTQALTNHFQAISSDGWWSLEDMKFNNTTDSSIGLGASSVRSITLGNVPWSAGQSFTQSPWDFMRKNKAEQITVLLSGPQEGCLSSVTYTSMIPLQMLQNYLRLVEQYHNVIFHGPEGSLQDYIAHQLALCMKHRQMAAGFSCEIVRAEVDAGFSKEQLVDLFISSACLIPVKQSPVKKKIIIILENLERSSLSELLGDFLAPLENRCPESPCTFQKGNGTAECYYFHENCFLMGTIAKACLQGSDLLVQQHFRWVQLRWDGEPMQGLLQRFLRRKVVNKFRGQVPSPCDPVCKTVDWALAVWRQLNSCLARLGTPEALLGPKYFLSCPVIPGHAQATVKWMSKLWNAVIAPRVQDAILSRASVKRQPGLGQTIAKKHPSQGQQAVVKAALSILLNKAVLHGCPLPRAELDQHTADFKGGSFPLSLVSSYNSCSKKKGESGAWRKVSTSPRKKSSRFSSPTWNKPDLSEEGIKNKTISQLNCNRNASLSKQKSFENDLSLTLSLDQRFSLGSDDEADLVKELQSMCSSKSESDISKIADSRDDLRRFDSPGNNPAFSATVNNPRMPVSQKEVSPLSSHQTTECSNSQSKTELGVSRVKSFLPVPRSKVTPCSQNTKRSSSSSNTRQIEINNNSKEEIWNLRKNEQVEKPNK.

5 disordered regions span residues Met-1–Thr-23, Glu-201–Asp-235, Ala-360–Gly-441, Gly-455–Arg-480, and Arg-499–Ser-617. Residues Lys-120–Lys-276 are a coiled coil. Polar residues predominate over residues Gly-385 to Thr-395. Asymmetric dimethylarginine is present on Arg-499. Positions Thr-584–Gln-594 are enriched in polar residues. ANK repeat units follow at residues Gly-710–Tyr-740, Asp-744–Ala-773, Asn-777–His-806, Gly-810–Ile-839, Asp-843–Gly-872, and Glu-914–Arg-944. Residues Cys-1447–Glu-1484 form a disordered region. Ser-1526 bears the Phosphoserine mark. Basic and acidic residues predominate over residues Ser-1544 to Asp-1562. Residues Ser-1544–Lys-1648 are disordered. Polar residues-rich tracts occupy residues Pro-1564–Asn-1576 and Lys-1584–Thr-1604. Low complexity predominate over residues Ser-1626–Gln-1640.

In terms of assembly, interacts with CTTN/cortactin SH3 domain. Interacts with STRN, STRN4/zinedin and MOB4/phocein; this interactions mediate the association with the STRIPAK core complex and may regulate dendritic spine distribution of the STRIPAK complex in hippocampal neurons. Activation of glutamate receptors weakens the interaction with STRN and STRN4.

Its subcellular location is the cytoplasm. It is found in the cell cortex. It localises to the cell projection. The protein localises to the dendritic spine. Its function is as follows. Regulates the dendritic spine distribution of CTTN/cortactin in hippocampal neurons, and thus controls dendritic spinogenesis and dendritic spine maintenance. Associates with the striatin-interacting phosphatase and kinase (STRIPAK) core complex to regulate dendritic spine distribution of the STRIPAK complex in hippocampal neurons. The sequence is that of Cortactin-binding protein 2 (CTTNBP2) from Equus caballus (Horse).